Reading from the N-terminus, the 257-residue chain is Imidazole glycerol phosphate synthase subunit HisF (257 aa).

Catalysis depends on residues D12 and D131.

Belongs to the HisA/HisF family. As to quaternary structure, heterodimer of HisH and HisF.

The protein localises to the cytoplasm. It carries out the reaction 5-[(5-phospho-1-deoxy-D-ribulos-1-ylimino)methylamino]-1-(5-phospho-beta-D-ribosyl)imidazole-4-carboxamide + L-glutamine = D-erythro-1-(imidazol-4-yl)glycerol 3-phosphate + 5-amino-1-(5-phospho-beta-D-ribosyl)imidazole-4-carboxamide + L-glutamate + H(+). It functions in the pathway amino-acid biosynthesis; L-histidine biosynthesis; L-histidine from 5-phospho-alpha-D-ribose 1-diphosphate: step 5/9. Its function is as follows. IGPS catalyzes the conversion of PRFAR and glutamine to IGP, AICAR and glutamate. The HisF subunit catalyzes the cyclization activity that produces IGP and AICAR from PRFAR using the ammonia provided by the HisH subunit. The protein is Imidazole glycerol phosphate synthase subunit HisF of Marinomonas sp. (strain MWYL1).